A 932-amino-acid polypeptide reads, in one-letter code: Protein hir1 (932 aa).

7 WD repeats span residues 16 to 55, 72 to 111, 132 to 171, 174 to 213, 222 to 265, 268 to 316, and 320 to 361; these read GHRLSIFSIHIHPDGSRIATGGLDGTIRIWSTEAINRENE, THTGTVTSVRFSPNGQYLASGSDDRVVIIWHKEEAIPGLG, GHDNDIQDLCWSYDSQLVVSVGLDSSIIVWNGTTFERLKR, AHQSHVKGITFDPAGKYFATESDDRTIKVWRVSDFSIEKT, PLST…SEIN, GHEG…PLLS, and VFQK…DMVS. Composition is skewed to polar residues over residues 405–426 and 441–453; these read STTDPTLVPQSSSTPKSAQKTP and TVDTNKLTASKEQ. Disordered regions lie at residues 405–470 and 498–520; these read STTD…NEIP and TPSTSRLASTQLQHTGSSQLPPQ. Low complexity predominate over residues 498-507; the sequence is TPSTSRLAST.

Belongs to the WD repeat HIR1 family. As to quaternary structure, interacts with his3 and slm9.

Its subcellular location is the cytoplasm. It is found in the nucleus. In terms of biological role, probably required for replication-independent chromatin assembly. Required for transcriptional silencing in the outer repeat (otr) centromeric repeats and the Tf2 long terminal repeat retrotransposons. Repressor of histone gene transcription in G1 arrested cells. Required for repression of htb1 gene expression outside of S phase. The sequence is that of Protein hir1 (hip1) from Schizosaccharomyces pombe (strain 972 / ATCC 24843) (Fission yeast).